The following is a 208-amino-acid chain: Small ribosomal subunit protein uS4 (208 aa).

Positions 98–161 (QRLDNVVFRM…KSNPQVVRAL (64 aa)) constitute an S4 RNA-binding domain.

It belongs to the universal ribosomal protein uS4 family. As to quaternary structure, part of the 30S ribosomal subunit. Contacts protein S5. The interaction surface between S4 and S5 is involved in control of translational fidelity.

Its function is as follows. One of the primary rRNA binding proteins, it binds directly to 16S rRNA where it nucleates assembly of the body of the 30S subunit. Functionally, with S5 and S12 plays an important role in translational accuracy. This Aliarcobacter butzleri (strain RM4018) (Arcobacter butzleri) protein is Small ribosomal subunit protein uS4.